Consider the following 443-residue polypeptide: Xaa-Pro dipeptidase (443 aa).

Residues D248, D259, H339, E384, and E423 each contribute to the Mn(2+) site.

Belongs to the peptidase M24B family. Bacterial-type prolidase subfamily. It depends on Mn(2+) as a cofactor.

The enzyme catalyses Xaa-L-Pro dipeptide + H2O = an L-alpha-amino acid + L-proline. In terms of biological role, splits dipeptides with a prolyl residue in the C-terminal position. The sequence is that of Xaa-Pro dipeptidase from Colwellia psychrerythraea (strain 34H / ATCC BAA-681) (Vibrio psychroerythus).